Reading from the N-terminus, the 291-residue chain is Elongation factor Ts (291 aa).

The involved in Mg(2+) ion dislocation from EF-Tu stretch occupies residues 78 to 81; the sequence is TDFV.

It belongs to the EF-Ts family.

Its subcellular location is the cytoplasm. In terms of biological role, associates with the EF-Tu.GDP complex and induces the exchange of GDP to GTP. It remains bound to the aminoacyl-tRNA.EF-Tu.GTP complex up to the GTP hydrolysis stage on the ribosome. The polypeptide is Elongation factor Ts (Ureaplasma parvum serovar 3 (strain ATCC 27815 / 27 / NCTC 11736)).